The following is a 196-amino-acid chain: Probable DNA-directed RNA polymerase subunit delta (196 aa).

One can recognise an HTH HARE-type domain in the interval 14–81 (LSMIEVAHEI…GDNVWGLRSW (68 aa)). Positions 119–150 (DDDDVIDYDDDDPEDEDLDNDYDDEDDDDDEG) are enriched in acidic residues. Positions 119-196 (DDDDVIDYDD…DADLDEENQD (78 aa)) are disordered. The span at 151 to 161 (SHELKQYTKDL) shows a compositional bias: basic and acidic residues. Composition is skewed to acidic residues over residues 162-176 (DDID…ELAD) and 186-196 (SDADLDEENQD).

This sequence belongs to the RpoE family. In terms of assembly, RNAP is composed of a core of 2 alpha, a beta and a beta' subunits. The core is associated with a delta subunit and one of several sigma factors.

In terms of biological role, participates in both the initiation and recycling phases of transcription. In the presence of the delta subunit, RNAP displays an increased specificity of transcription, a decreased affinity for nucleic acids, and an increased efficiency of RNA synthesis because of enhanced recycling. This is Probable DNA-directed RNA polymerase subunit delta from Ligilactobacillus salivarius (strain UCC118) (Lactobacillus salivarius).